Reading from the N-terminus, the 311-residue chain is 4-diphosphocytidyl-2-C-methyl-D-erythritol kinase (311 aa).

Residue Lys16 is part of the active site. 100–110 serves as a coordination point for ATP; the sequence is PIGAGLAGGSS. Residue Asp142 is part of the active site.

The protein belongs to the GHMP kinase family. IspE subfamily.

The enzyme catalyses 4-CDP-2-C-methyl-D-erythritol + ATP = 4-CDP-2-C-methyl-D-erythritol 2-phosphate + ADP + H(+). The protein operates within isoprenoid biosynthesis; isopentenyl diphosphate biosynthesis via DXP pathway; isopentenyl diphosphate from 1-deoxy-D-xylulose 5-phosphate: step 3/6. Functionally, catalyzes the phosphorylation of the position 2 hydroxy group of 4-diphosphocytidyl-2C-methyl-D-erythritol. This Prochlorococcus marinus (strain MIT 9312) protein is 4-diphosphocytidyl-2-C-methyl-D-erythritol kinase.